The primary structure comprises 143 residues: MTIERTFSIIKPDAVAKNIIGEIYHRFECAGLHIIAAKMLHLSQEQAAGFYAEHKGKPFYDNLLKFMTSGPIVVQVLEGQDAIRRHRELLGSTDPEKAQAGTIRADHAISVTQNAVHGSDSSESAAREIEFFFTEDEICPRTR.

K11, F59, R87, T93, R104, and N114 together coordinate ATP. H117 acts as the Pros-phosphohistidine intermediate in catalysis.

This sequence belongs to the NDK family. In terms of assembly, homotetramer. Mg(2+) is required as a cofactor.

The protein resides in the cytoplasm. It catalyses the reaction a 2'-deoxyribonucleoside 5'-diphosphate + ATP = a 2'-deoxyribonucleoside 5'-triphosphate + ADP. The enzyme catalyses a ribonucleoside 5'-diphosphate + ATP = a ribonucleoside 5'-triphosphate + ADP. In terms of biological role, major role in the synthesis of nucleoside triphosphates other than ATP. The ATP gamma phosphate is transferred to the NDP beta phosphate via a ping-pong mechanism, using a phosphorylated active-site intermediate. In Tolumonas auensis (strain DSM 9187 / NBRC 110442 / TA 4), this protein is Nucleoside diphosphate kinase.